We begin with the raw amino-acid sequence, 896 residues long: Alanine--tRNA ligase (896 aa).

Zn(2+) is bound by residues H599, H603, C707, and H711.

It belongs to the class-II aminoacyl-tRNA synthetase family. It depends on Zn(2+) as a cofactor.

It is found in the cytoplasm. The enzyme catalyses tRNA(Ala) + L-alanine + ATP = L-alanyl-tRNA(Ala) + AMP + diphosphate. Functionally, catalyzes the attachment of alanine to tRNA(Ala) in a two-step reaction: alanine is first activated by ATP to form Ala-AMP and then transferred to the acceptor end of tRNA(Ala). Also edits incorrectly charged Ser-tRNA(Ala) and Gly-tRNA(Ala) via its editing domain. In Pyrobaculum calidifontis (strain DSM 21063 / JCM 11548 / VA1), this protein is Alanine--tRNA ligase.